Reading from the N-terminus, the 346-residue chain is Probable electron transfer flavoprotein subunit alpha, mitochondrial (346 aa).

285–313 provides a ligand contact to FAD; that stretch reads LYVAIGISGAIQHLAGMKESKMIIAINKD.

Belongs to the ETF alpha-subunit/FixB family. In terms of assembly, heterodimer of an alpha and a beta subunit. Requires FAD as cofactor.

It localises to the mitochondrion matrix. Its function is as follows. The electron transfer flavoprotein serves as a specific electron acceptor for several dehydrogenases, including five acyl-CoA dehydrogenases, glutaryl-CoA and sarcosine dehydrogenase. It transfers the electrons to the main mitochondrial respiratory chain via ETF-ubiquinone oxidoreductase (ETF dehydrogenase). The polypeptide is Probable electron transfer flavoprotein subunit alpha, mitochondrial (ETF1) (Cryptococcus neoformans var. neoformans serotype D (strain B-3501A) (Filobasidiella neoformans)).